We begin with the raw amino-acid sequence, 228 residues long: L-ribulose-5-phosphate 4-epimerase UlaF (228 aa).

Substrate is bound by residues 26-27 (GN), 43-44 (SG), and 72-73 (SS). Zn(2+) is bound by residues D74, H93, and H95. The active-site Proton donor/acceptor is D118. H167 contacts Zn(2+). Y225 acts as the Proton donor/acceptor in catalysis.

The protein belongs to the aldolase class II family. AraD/FucA subfamily. It depends on Zn(2+) as a cofactor.

It carries out the reaction L-ribulose 5-phosphate = D-xylulose 5-phosphate. Its pathway is cofactor degradation; L-ascorbate degradation; D-xylulose 5-phosphate from L-ascorbate: step 4/4. Its function is as follows. Catalyzes the isomerization of L-ribulose 5-phosphate to D-xylulose 5-phosphate. Is involved in the anaerobic L-ascorbate utilization. The sequence is that of L-ribulose-5-phosphate 4-epimerase UlaF from Escherichia coli O45:K1 (strain S88 / ExPEC).